The sequence spans 157 residues: Ribosome-binding factor A (157 aa).

Residues 127-157 (QQQFGSEDASVEDEVLGDDVADDADETEGKD) are disordered. Residues 135–157 (ASVEDEVLGDDVADDADETEGKD) are compositionally biased toward acidic residues.

Belongs to the RbfA family. As to quaternary structure, monomer. Binds 30S ribosomal subunits, but not 50S ribosomal subunits or 70S ribosomes.

The protein resides in the cytoplasm. Its function is as follows. One of several proteins that assist in the late maturation steps of the functional core of the 30S ribosomal subunit. Associates with free 30S ribosomal subunits (but not with 30S subunits that are part of 70S ribosomes or polysomes). Required for efficient processing of 16S rRNA. May interact with the 5'-terminal helix region of 16S rRNA. The sequence is that of Ribosome-binding factor A from Shewanella baltica (strain OS155 / ATCC BAA-1091).